A 208-amino-acid chain; its full sequence is Granulocyte colony-stimulating factor (208 aa).

The first 30 residues, 1 to 30, serve as a signal peptide directing secretion; sequence MAQLSAQRRMKLMALQLLLWQSALWSGREA. Intrachain disulfides connect C72/C78 and C100/C110. T169 carries an O-linked (GalNAc...) threonine glycan.

This sequence belongs to the IL-6 superfamily. In terms of assembly, monomer. In terms of processing, O-glycosylated.

Its subcellular location is the secreted. Functionally, granulocyte/macrophage colony-stimulating factors are cytokines that act in hematopoiesis by controlling the production, differentiation, and function of 2 related white cell populations of the blood, the granulocytes and the monocytes-macrophages. This CSF induces granulocytes. The protein is Granulocyte colony-stimulating factor (Csf3) of Mus musculus (Mouse).